The following is a 712-amino-acid chain: U11/U12 small nuclear ribonucleoprotein 48 kDa protein (712 aa).

A CHHC U11-48K-type zinc finger spans residues 98 to 125; sequence FVRCPFDSNHFMPPEALFLHSLRCPNTL. Residues C101, H107, H117, and C121 each coordinate Zn(2+). A disordered region spans residues 562–712; the sequence is QSRSPIGNDQ…EDRYIPTEKE (151 aa). Composition is skewed to basic and acidic residues over residues 585-595, 603-614, 629-663, 672-693, and 702-712; these read KQWKGENRADI, QNSDKVKRHDEY, KHSD…HSIE, SSRE…DRRS, and FEDRYIPTEKE.

As to quaternary structure, component of the U11/U12 snRNPs that are part of the U12-type spliceosome. Not found in the major spliceosome.

It is found in the nucleus. Functionally, likely involved in U12-type 5' splice site recognition. This is U11/U12 small nuclear ribonucleoprotein 48 kDa protein (SNRNP48) from Arabidopsis thaliana (Mouse-ear cress).